An 874-amino-acid polypeptide reads, in one-letter code: Leucine--tRNA ligase (874 aa).

The 'HIGH' region motif lies at proline 43–histidine 53. Residues lysine 630–serine 634 carry the 'KMSKS' region motif. Lysine 633 serves as a coordination point for ATP.

It belongs to the class-I aminoacyl-tRNA synthetase family.

The protein resides in the cytoplasm. The catalysed reaction is tRNA(Leu) + L-leucine + ATP = L-leucyl-tRNA(Leu) + AMP + diphosphate. This chain is Leucine--tRNA ligase, found in Bradyrhizobium sp. (strain ORS 278).